The following is a 182-amino-acid chain: Crossover junction endodeoxyribonuclease RuvC (182 aa).

Active-site residues include Asp7, Glu67, and Asp139. Residues Asp7, Glu67, and Asp139 each contribute to the Mg(2+) site.

It belongs to the RuvC family. Homodimer which binds Holliday junction (HJ) DNA. The HJ becomes 2-fold symmetrical on binding to RuvC with unstacked arms; it has a different conformation from HJ DNA in complex with RuvA. In the full resolvosome a probable DNA-RuvA(4)-RuvB(12)-RuvC(2) complex forms which resolves the HJ. Requires Mg(2+) as cofactor.

It localises to the cytoplasm. It catalyses the reaction Endonucleolytic cleavage at a junction such as a reciprocal single-stranded crossover between two homologous DNA duplexes (Holliday junction).. Functionally, the RuvA-RuvB-RuvC complex processes Holliday junction (HJ) DNA during genetic recombination and DNA repair. Endonuclease that resolves HJ intermediates. Cleaves cruciform DNA by making single-stranded nicks across the HJ at symmetrical positions within the homologous arms, yielding a 5'-phosphate and a 3'-hydroxyl group; requires a central core of homology in the junction. The consensus cleavage sequence is 5'-(A/T)TT(C/G)-3'. Cleavage occurs on the 3'-side of the TT dinucleotide at the point of strand exchange. HJ branch migration catalyzed by RuvA-RuvB allows RuvC to scan DNA until it finds its consensus sequence, where it cleaves and resolves the cruciform DNA. This chain is Crossover junction endodeoxyribonuclease RuvC, found in Bordetella parapertussis (strain 12822 / ATCC BAA-587 / NCTC 13253).